A 116-amino-acid polypeptide reads, in one-letter code: Putative pterin-4-alpha-carbinolamine dehydratase (116 aa).

Belongs to the pterin-4-alpha-carbinolamine dehydratase family.

It carries out the reaction (4aS,6R)-4a-hydroxy-L-erythro-5,6,7,8-tetrahydrobiopterin = (6R)-L-erythro-6,7-dihydrobiopterin + H2O. This is Putative pterin-4-alpha-carbinolamine dehydratase from Microcystis aeruginosa (strain NIES-843 / IAM M-2473).